Here is a 188-residue protein sequence, read N- to C-terminus: Small ribosomal subunit protein bS18c (188 aa).

The span at 1–19 shows a compositional bias: low complexity; it reads MNNQSFNNFSQVNSNSSFF. The segment at 1–79 is disordered; the sequence is MNNQSFNNFS…TSNKRKVLSV (79 aa). The segment covering 25-71 has biased composition (polar residues); that stretch reads NLQNTNLEMTNGTNPPSSFSKQTPQKRQSFGTNTNFSKGNSSRGSTS.

This sequence belongs to the bacterial ribosomal protein bS18 family. Part of the 30S ribosomal subunit.

It is found in the plastid. Its subcellular location is the chloroplast. This chain is Small ribosomal subunit protein bS18c, found in Tetradesmus obliquus (Green alga).